The chain runs to 335 residues: Cathepsin B (335 aa).

The first 17 residues, 1 to 17 (MWRLLATLSCLLVLTSA), serve as a signal peptide directing secretion. The propeptide at 18–79 (RSSLYFPPLS…QRDAFAADVV (62 aa)) is activation peptide. Disulfide bonds link Cys-93/Cys-122, Cys-105/Cys-150, Cys-141/Cys-207, Cys-142/Cys-146, Cys-179/Cys-211, and Cys-187/Cys-198. Cys-108 is an active-site residue. A glycan (N-linked (GlcNAc...) asparagine) is linked at Asn-192. N6-acetyllysine is present on Lys-220. Cys-227 and Cys-331 are oxidised to a cystine. Active-site residues include His-278 and Asn-298. Positions 333-335 (HQY) are excised as a propeptide.

This sequence belongs to the peptidase C1 family. As to quaternary structure, dimer of a heavy chain and a light chain cross-linked by a disulfide bond. Interacts with SRPX2. Directly interacts with SHKBP1. Expressed in myoblasts, the myotube, fibroblasts and fetal muscle (at protein level). Expressed in the spleen (at protein level).

It is found in the lysosome. The protein localises to the melanosome. The protein resides in the secreted. It localises to the extracellular space. Its subcellular location is the apical cell membrane. The catalysed reaction is Hydrolysis of proteins with broad specificity for peptide bonds. Preferentially cleaves -Arg-Arg-|-Xaa bonds in small molecule substrates (thus differing from cathepsin L). In addition to being an endopeptidase, shows peptidyl-dipeptidase activity, liberating C-terminal dipeptides.. Thiol protease which is believed to participate in intracellular degradation and turnover of proteins. Cleaves matrix extracellular phosphoglycoprotein MEPE. Involved in the solubilization of cross-linked TG/thyroglobulin in the thyroid follicle lumen. Has also been implicated in tumor invasion and metastasis. In Bos taurus (Bovine), this protein is Cathepsin B (CTSB).